Consider the following 108-residue polypeptide: UPF0145 protein Tmel_1129 (108 aa).

Belongs to the UPF0145 family.

The protein is UPF0145 protein Tmel_1129 of Thermosipho melanesiensis (strain DSM 12029 / CIP 104789 / BI429).